Reading from the N-terminus, the 412-residue chain is Protein Mb3436c (412 aa).

Lysine 227 carries the post-translational modification N6-(pyridoxal phosphate)lysine.

The protein belongs to the DegT/DnrJ/EryC1 family.

The polypeptide is Protein Mb3436c (Mycobacterium bovis (strain ATCC BAA-935 / AF2122/97)).